The primary structure comprises 113 residues: Dolichyl-diphosphooligosaccharide--protein glycosyltransferase subunit DAD1 (113 aa).

Ser-2 carries the post-translational modification N-acetylserine. Residues 2-30 (SASVLSVISRFLEEYLSATPQRLKLLDAY) lie on the Cytoplasmic side of the membrane. Residues 31–51 (LLYILLTGALQFGYCLLVGTF) form a helical membrane-spanning segment. Position 52 (Pro-52) is a topological domain, lumenal. A helical membrane pass occupies residues 53–73 (FNSFLSGFISCVGSFILAVCL). Residues 74–92 (RIQINPQNKADFQGISPER) are Cytoplasmic-facing. Residues 93-113 (AFADFLFASTILHLVVMNFVG) form a helical membrane-spanning segment.

The protein belongs to the DAD/OST2 family. In terms of assembly, component of the oligosaccharyltransferase (OST) complex. OST exists in two different complex forms which contain common core subunits RPN1, RPN2, OST48, OST4, DAD1 and TMEM258, either STT3A or STT3B as catalytic subunits, and form-specific accessory subunits. STT3A complex assembly occurs through the formation of 3 subcomplexes. Subcomplex 1 contains RPN1 and TMEM258, subcomplex 2 contains the STT3A-specific subunits STT3A, DC2/OSTC, and KCP2 as well as the core subunit OST4, and subcomplex 3 contains RPN2, DAD1, and OST48. The STT3A complex can form stable complexes with the Sec61 complex or with both the Sec61 and TRAP complexes.

It is found in the endoplasmic reticulum membrane. It functions in the pathway protein modification; protein glycosylation. Subunit of the oligosaccharyl transferase (OST) complex that catalyzes the initial transfer of a defined glycan (Glc(3)Man(9)GlcNAc(2) in eukaryotes) from the lipid carrier dolichol-pyrophosphate to an asparagine residue within an Asn-X-Ser/Thr consensus motif in nascent polypeptide chains, the first step in protein N-glycosylation. N-glycosylation occurs cotranslationally and the complex associates with the Sec61 complex at the channel-forming translocon complex that mediates protein translocation across the endoplasmic reticulum (ER). All subunits are required for a maximal enzyme activity. In Bos taurus (Bovine), this protein is Dolichyl-diphosphooligosaccharide--protein glycosyltransferase subunit DAD1.